Reading from the N-terminus, the 280-residue chain is Bifunctional protein FolD (280 aa).

Residues glycine 161–serine 163, serine 186, and isoleucine 227 contribute to the NADP(+) site.

Belongs to the tetrahydrofolate dehydrogenase/cyclohydrolase family. In terms of assembly, homodimer.

It carries out the reaction (6R)-5,10-methylene-5,6,7,8-tetrahydrofolate + NADP(+) = (6R)-5,10-methenyltetrahydrofolate + NADPH. The enzyme catalyses (6R)-5,10-methenyltetrahydrofolate + H2O = (6R)-10-formyltetrahydrofolate + H(+). The protein operates within one-carbon metabolism; tetrahydrofolate interconversion. Its function is as follows. Catalyzes the oxidation of 5,10-methylenetetrahydrofolate to 5,10-methenyltetrahydrofolate and then the hydrolysis of 5,10-methenyltetrahydrofolate to 10-formyltetrahydrofolate. In Caldanaerobacter subterraneus subsp. tengcongensis (strain DSM 15242 / JCM 11007 / NBRC 100824 / MB4) (Thermoanaerobacter tengcongensis), this protein is Bifunctional protein FolD.